Consider the following 1760-residue polypeptide: MSNRFSVYSSHSTGVSSARPSAPSTVTTTTLLNALHAYYNSGQPYQLDAGTSLVVNTWVTATRANANGQEGGTIDRDLALRAWEHARRRAEDGCIVLCSTHQSTPSIFEPFLTALPLTTPNIAFTALTALRPFLSAVTSFNPSYSLYSALSARYSINLKGDVVGLSLALSTSGINVRKGLLDIPTEAGYRAFDVFYYLLASISTPAEREFLNLKDASSYALLSKSGTYTPPAYLPAADDAAAAEDFRAALKSIGIKGAAQRGLLSTLAGLLKLGNATGFLVDQEDLEEACDEVGGLLGLDPEVLLHSCSTDDREVLISGIYEALVDWVIEKANEAISSELQAILDNDPSTSGGSGPGGQWTDDDTVSITVVDIPRPALGKAVAVRNVFDDNAGINAEMKEDGVTVPPVGHAIANDVSSAVAQVEADLGITTGSAWHEREYELGKRQEVLEKVGLEVDMDSFLRKLLLPVEAEGITVGKRGRFDLPTTLGSSRVWHHISVHPTDDLPETLSTFTPTAAWSAGVVSRQLREWRLAEWANRRLRQLDFTADFDMDEFVGRYYRLGCAEGRDGVESWLMERGWTNGDAFVGHQRIWMRESAWWEAETMLDMKPEEPATANPFLYGNTMLDAGMPHYAGTPMAESTSLLGSRDDLLNHRQSTLAPSFHGGAKSIAPSVPQTLNMGGDYGLGSKGDTRKWDNPYSDEYAHYNNGELDPEVGDPKHIEKKPITQGRRIWVGFVWALTFWIPSFALRWIGRMKRPDVRMAWREKLVLMLIILLFNGVVCFYIIAFGDLLCPNKDKAWNEKQLSWHALDNDFYVSIHGNVYDITKFWRLQHSDSSIETTTSNMKPFAGEILDQYFTPPLTRFCSPYVTEQSVTLQFNNTNALEYPNAEHYCGSYHTPSTTTKLHNITWYEDIFLPKIKTYYKGPLVWSKSTVQKQATDSSRYWVIVHDKIYDLTDYFYTAELFDNDDTYAFLPSSVTDLFKNYAGEDVTDKWQNTTDFQQSQTCLDYVFYKGKVDFRDSPRCTVNNWILLSFTVLICAVILVKFVSALQLGSKRRPAPQDKFVICHVPAYTEGEDALRKGLDSLTALQYDNKRKLIFVICDGMIVGGGNDRPTPKIVLDILGVDPKVDPPALPCMAIGQGSEQLNYGKVYSGLYEYEGNVVPYIVVVKVGKESEQSRPKPGNRGKRDSQIMMMRFLNRVHHRAPMSPLELEIFHQINNVIGVDPELYEYCLMVDADTSVREDSLNRLVAACANDARIAGICGETSLQNEERSWWTMIQVYEYYISHHLAKAFESLFGSVTCLPGCFCMYRLRTADKGKPLIISDKVIEEYADNDVDTLHKKNLLSLGEDRFLTTLMTKHFPEMSYKFIPDAYASTAAPETWSVLLSQRRRWINSTVHNLVEVAALKDMCGFCLFSMRFVVLVDLLGTVILPATCVYLGYLIYRVASHTGPFPMISIVILAGVYGLQAIIFLLKRQWQHIGWMIIYICAYPIYNFILPLYSFWKQDDFSWGSTRIVIGEQGNKRVVAVDDEGFDPRSVPLQRWDDYALANNLPGRRGDFGMSQEKMYGGRYDDMALEMDDMHSNYSSVKPASTILTGFPHHQGRHGSPYMPPQSPAPFANTPGNRNSHMSSLTRYTDQPFASGHMASRSLGNLSQVPDGMTNRHSVGLMQSTENLLGRPNSRSPVGGISRPVSAFDFRGSGGPDEGAITEAIRACLAEVDLDTVTKKQVRALVEQRLQTTLMGDKRTFLDRQIDHELANM.

The span at 1-17 shows a compositional bias: low complexity; the sequence is MSNRFSVYSSHSTGVSS. Residues 1-23 are disordered; that stretch reads MSNRFSVYSSHSTGVSSARPSAP. A Myosin motor domain is found at 1–374; the sequence is MSNRFSVYSS…TVSITVVDIP (374 aa). The N-linked (GlcNAc...) asparagine glycan is linked to Asn-275. Residues 344-363 form a disordered region; sequence LDNDPSTSGGSGPGGQWTDD. Pro-374 is a region of interest (actin-binding). 2 consecutive transmembrane segments (helical) span residues 731 to 751 and 767 to 787; these read IWVGFVWALTFWIPSFALRWI and LVLMLIILLFNGVVCFYIIAF. N-linked (GlcNAc...) asparagine glycosylation is found at Asn-878, Asn-906, and Asn-995. The helical transmembrane segment at 1029–1049 threads the bilayer; the sequence is ILLSFTVLICAVILVKFVSAL. N-linked (GlcNAc...) asparagine glycosylation occurs at Asn-1394. 3 helical membrane passes run 1419–1439, 1452–1472, and 1480–1500; these read FVVLVDLLGTVILPATCVYLG, FPMISIVILAGVYGLQAIIFL, and IGWMIIYICAYPIYNFILPLY. N-linked (GlcNAc...) asparagine glycans are attached at residues Asn-1584 and Asn-1652. The 57-residue stretch at 1702–1758 folds into the DEK-C domain; that stretch reads GPDEGAITEAIRACLAEVDLDTVTKKQVRALVEQRLQTTLMGDKRTFLDRQIDHELA.

It in the N-terminal section; belongs to the TRAFAC class myosin-kinesin ATPase superfamily. Myosin family. This sequence in the C-terminal section; belongs to the chitin synthase family. Class V subfamily.

It localises to the cell membrane. Its subcellular location is the cell septum. It is found in the cell tip. The enzyme catalyses [(1-&gt;4)-N-acetyl-beta-D-glucosaminyl](n) + UDP-N-acetyl-alpha-D-glucosamine = [(1-&gt;4)-N-acetyl-beta-D-glucosaminyl](n+1) + UDP + H(+). Functionally, polymerizes chitin, a structural polymer of the cell wall and septum, by transferring the sugar moiety of UDP-GlcNAc to the non-reducing end of the growing chitin polymer. Plays an important role in septal growth or maintenance. Mediates colony spore formation. This is Chitin synthase csmB from Aspergillus niger (strain ATCC MYA-4892 / CBS 513.88 / FGSC A1513).